Here is a 54-residue protein sequence, read N- to C-terminus: Large ribosomal subunit protein bL33 (54 aa).

The protein belongs to the bacterial ribosomal protein bL33 family.

The polypeptide is Large ribosomal subunit protein bL33 (Corynebacterium glutamicum (strain R)).